Here is a 79-residue protein sequence, read N- to C-terminus: Putative membrane protein insertion efficiency factor (79 aa).

Belongs to the UPF0161 family.

It is found in the cell inner membrane. Its function is as follows. Could be involved in insertion of integral membrane proteins into the membrane. This Prochlorococcus marinus (strain NATL1A) protein is Putative membrane protein insertion efficiency factor.